Here is a 795-residue protein sequence, read N- to C-terminus: ATP-dependent RNA helicase DHX15 (795 aa).

Residues 1-111 are disordered; it reads MSKRHRLDLG…HTGHTGHTSL (111 aa). The residue at position 15 (Ser-15) is a Phosphoserine. Over residues 20–62 the composition is skewed to basic and acidic residues; that stretch reads AGTDGKDRERDRDREDRSKDRDRERDRGDREREREKEKEKELR. Over residues 79–110 the composition is skewed to low complexity; sequence ASHSAHSTHSAHSTHSTHSAHSTHTGHTGHTS. A Helicase ATP-binding domain is found at 147–313; sequence TDILVRHQSF…FDNCPLLTIP (167 aa). 160–167 serves as a coordination point for ATP; it reads GETGSGKT. The DEAH box signature appears at 260–263; the sequence is DEAH. One can recognise a Helicase C-terminal domain in the interval 338–518; the sequence is TVIQIHMCEE…SVVLQLKKLG (181 aa). Lys-488 carries the post-translational modification N6-acetyllysine. A Glycyl lysine isopeptide (Lys-Gly) (interchain with G-Cter in SUMO2) cross-link involves residue Lys-786.

Belongs to the DEAD box helicase family. DEAH subfamily. DDX15/PRP43 sub-subfamily. In terms of assembly, component of the U11/U12 snRNPs that are part of the U12-type spliceosome. Identified in the Intron Large spliceosome complex (IL, also named intron lariat spliceosome), a post-mRNA release spliceosomal complex containing the excised intron, U2, U5 and U6 snRNPs, and splicing factors; the association may be transient. The IL complex exists in two distinct conformations, one with the DHX15 (ILS2) and one without (ILS1). Interacts with TFIP11 (via G-patch domain); indicative for a recruitment to the IL complex. Interacts with SSB/La. Interacts with GPATCH2 (via G-patch domain); promoting the RNA helicase activity. Interacts with NKRF (via G-patch domain); promoting the RNA helicase activity. Interacts with NLRP6. As to expression, ubiquitous.

The protein resides in the nucleus. It localises to the nucleolus. The enzyme catalyses ATP + H2O = ADP + phosphate + H(+). With respect to regulation, ATPase activity is enhanced upon binding to G-patch domain-containing proteins. G-patch domain-containing proteins act like a brace that tethers mobile sections of DHX15 together, stabilizing a functional conformation with high RNA affinity, thereby promoting the ATPase activity. RNA helicase involved in mRNA processing and antiviral innate immunity. Pre-mRNA processing factor involved in disassembly of spliceosomes after the release of mature mRNA. In cooperation with TFIP11 seem to be involved in the transition of the U2, U5 and U6 snRNP-containing IL complex to the snRNP-free IS complex leading to efficient debranching and turnover of excised introns. Plays a key role in antiviral innate immunity by promoting both MAVS-dependent signaling and NLRP6 inflammasome. Acts as an RNA virus sensor: recognizes and binds viral double stranded RNA (dsRNA) and activates the MAVS-dependent signaling to produce interferon-beta and interferon lambda-3 (IFNL3). Involved in intestinal antiviral innate immunity together with NLRP6: recognizes and binds viral dsRNA and promotes activation of the NLRP6 inflammasome in intestinal epithelial cells to restrict infection by enteric viruses. The NLRP6 inflammasome acts by promoting maturation and secretion of IL18 in the extracellular milieu. Also involved in antibacterial innate immunity by promoting Wnt-induced antimicrobial protein expression in Paneth cells. The sequence is that of ATP-dependent RNA helicase DHX15 from Mus musculus (Mouse).